Here is a 158-residue protein sequence, read N- to C-terminus: N5-carboxyaminoimidazole ribonucleotide mutase (158 aa).

Positions 10, 13, and 40 each coordinate substrate.

The protein belongs to the AIR carboxylase family. Class I subfamily.

It catalyses the reaction 5-carboxyamino-1-(5-phospho-D-ribosyl)imidazole + H(+) = 5-amino-1-(5-phospho-D-ribosyl)imidazole-4-carboxylate. It functions in the pathway purine metabolism; IMP biosynthesis via de novo pathway; 5-amino-1-(5-phospho-D-ribosyl)imidazole-4-carboxylate from 5-amino-1-(5-phospho-D-ribosyl)imidazole (N5-CAIR route): step 2/2. Its function is as follows. Catalyzes the conversion of N5-carboxyaminoimidazole ribonucleotide (N5-CAIR) to 4-carboxy-5-aminoimidazole ribonucleotide (CAIR). The chain is N5-carboxyaminoimidazole ribonucleotide mutase from Saccharolobus solfataricus (strain ATCC 35092 / DSM 1617 / JCM 11322 / P2) (Sulfolobus solfataricus).